The chain runs to 1215 residues: von Willebrand factor A domain-containing protein 5B1 (1215 aa).

The first 18 residues, 1-18 (MPGLLNCLTGAALPLMES), serve as a signal peptide directing secretion. Residues 19–141 (DVTSYVSGYA…NVTVFISTSS (123 aa)) form the VIT domain. Asparagine 132 carries N-linked (GlcNAc...) asparagine glycosylation. The VWFA domain occupies 353–532 (EFIFLIDRSN…KAMAPVLSDV (180 aa)). Residues 595–674 (SVFYPSQDEG…DPTGTARRYP (80 aa)) form a disordered region. Composition is skewed to polar residues over residues 608–621 (GSGNCAKNVNQGQT) and 646–667 (YSTNQISSHKTCPRATTASDPT). Tyrosine 879 bears the Phosphotyrosine mark. Disordered stretches follow at residues 934 to 953 (GSSAGLGRPQSMLREHSSAA), 964 to 999 (QDSPTSTFNKTPSPGHEKQTTAEGPPQNLSASAPSS), and 1100 to 1121 (SPQDCTSLSSSPPSCDGISLKS). 3 stretches are compositionally biased toward polar residues: residues 964–975 (QDSPTSTFNKTP), 990–999 (QNLSASAPSS), and 1100–1112 (SPQDCTSLSSSPP).

It localises to the secreted. The polypeptide is von Willebrand factor A domain-containing protein 5B1 (Vwa5b1) (Mus musculus (Mouse)).